Consider the following 174-residue polypeptide: NADH-quinone oxidoreductase subunit I (174 aa).

4Fe-4S ferredoxin-type domains are found at residues 61–91 (LTVKKDGSLRCTACMLCATNCPAECIKITAA) and 103–132 (ISYEIDILRCVFCGFCEEACPVDAIRLGPE). [4Fe-4S] cluster is bound by residues Cys71, Cys74, Cys77, Cys81, Cys112, Cys115, Cys118, and Cys122.

It belongs to the complex I 23 kDa subunit family. In terms of assembly, NDH-1 is composed of 14 different subunits. Subunits NuoA, H, J, K, L, M, N constitute the membrane sector of the complex. Requires [4Fe-4S] cluster as cofactor.

It localises to the cell inner membrane. The enzyme catalyses a quinone + NADH + 5 H(+)(in) = a quinol + NAD(+) + 4 H(+)(out). NDH-1 shuttles electrons from NADH, via FMN and iron-sulfur (Fe-S) centers, to quinones in the respiratory chain. The immediate electron acceptor for the enzyme in this species is believed to be ubiquinone. Couples the redox reaction to proton translocation (for every two electrons transferred, four hydrogen ions are translocated across the cytoplasmic membrane), and thus conserves the redox energy in a proton gradient. This chain is NADH-quinone oxidoreductase subunit I, found in Bdellovibrio bacteriovorus (strain ATCC 15356 / DSM 50701 / NCIMB 9529 / HD100).